The chain runs to 438 residues: MNFLGNPRSHTAAFLPVCWLLLNILKPGHCHSYDNRYAGDKVIRLIPKSEEEALALKNIYHQLKVDLWQPSSISYVSEGTITDVHISQNASRTLLAFLQETHIYYKVLIEDLQKAVENENSLQTQRNRRSLSEYNYEVYHSLEDIQSWLHHLNQTQPGLVRVFSIGRSYEGRPLFIMQLGRKSRAYKRAVWIDCGIHAREWIGPAFCQWFVREAILTYKTDPAMKKMLNHLYFYIMPVFNVDGYHFSWTHDRFWRKTRSRDSKFRCRGVDANRNWKVKWCDEGASAHPCDDTYCGPFPESEPEVKAVANFLRKHRKRIRAYLSFHAYAQMLLYPYSYKYATIPNFSCVEFAAHKAVKALRSVHGIRYRHGPASQTLYVSSGNSMDWAYKNGIPYAFAFELRDTGHFGFLLPEMLIKPTCTETMLAVKNITMHLLKKCP.

The signal sequence occupies residues 1–30; sequence MNFLGNPRSHTAAFLPVCWLLLNILKPGHC. A propeptide spans 31-129 (activation peptide); sequence HSYDNRYAGD…NSLQTQRNRR (99 aa). N-linked (GlcNAc...) asparagine glycosylation is found at asparagine 89 and asparagine 153. One can recognise a Peptidase M14 domain in the interval 138–433; sequence VYHSLEDIQS…LAVKNITMHL (296 aa). Zn(2+) is bound by residues histidine 197 and glutamate 200. Substrate-binding positions include 197 to 200, arginine 255, and 272 to 273; these read HARE and NR. A disulfide bridge links cysteine 266 with cysteine 289. Zn(2+) is bound at residue histidine 325. 326–327 serves as a coordination point for substrate; that stretch reads AY. A glycan (N-linked (GlcNAc...) asparagine) is linked at asparagine 344. Tyrosine 377 is a binding site for substrate. Glutamate 399 (proton donor/acceptor) is an active-site residue. N-linked (GlcNAc...) asparagine glycosylation is present at asparagine 428.

It belongs to the peptidase M14 family. The cofactor is Zn(2+). As to expression, in brain, highly expressed in the olfactory bulb with lower levels in other regions including cerebral cortex, hippocampus, hypothalamus, striatum and medulla. Within the olfactory bulb, highest levels occur in the mitral and granular layers with lower levels in the internal and external plexiform layers. Moderate levels are found in the epididymis with low levels in colon and spleen. Not detected in adrenal, liver, lung, ovary or testis. At embryonic day 14.5, enriched in eye, ear, osteoblasts, stomach, skin, dorsal root ganglia and throughout the CNS.

Its subcellular location is the secreted. It is found in the extracellular space. The protein resides in the extracellular matrix. May be involved in the proteolytic inactivation of enkephalins and neurotensin in some brain areas. May convert inactive angiotensin I into the biologically active angiotensin II. Releases a C-terminal amino acid, with preference for large hydrophobic C-terminal amino acids and shows only very weak activity toward small amino acids and histidine. The protein is Carboxypeptidase A6 (Cpa6) of Mus musculus (Mouse).